We begin with the raw amino-acid sequence, 304 residues long: UDP-N-acetylenolpyruvoylglucosamine reductase (304 aa).

The region spanning 33–198 is the FAD-binding PCMH-type domain; it reads RVGGPADILV…IEATIELESG (166 aa). Arg-177 is a catalytic residue. The active-site Proton donor is Ser-227. Residue Glu-297 is part of the active site.

This sequence belongs to the MurB family. It depends on FAD as a cofactor.

Its subcellular location is the cytoplasm. The enzyme catalyses UDP-N-acetyl-alpha-D-muramate + NADP(+) = UDP-N-acetyl-3-O-(1-carboxyvinyl)-alpha-D-glucosamine + NADPH + H(+). It participates in cell wall biogenesis; peptidoglycan biosynthesis. Cell wall formation. This Clostridium perfringens (strain SM101 / Type A) protein is UDP-N-acetylenolpyruvoylglucosamine reductase.